A 452-amino-acid chain; its full sequence is Phosphoglucosamine mutase (452 aa).

Ser-104 functions as the Phosphoserine intermediate in the catalytic mechanism. Mg(2+)-binding residues include Ser-104, Asp-246, Asp-248, and Asp-250. A Phosphoserine modification is found at Ser-104.

The protein belongs to the phosphohexose mutase family. Mg(2+) is required as a cofactor. In terms of processing, activated by phosphorylation.

It carries out the reaction alpha-D-glucosamine 1-phosphate = D-glucosamine 6-phosphate. Catalyzes the conversion of glucosamine-6-phosphate to glucosamine-1-phosphate. The chain is Phosphoglucosamine mutase from Streptomyces avermitilis (strain ATCC 31267 / DSM 46492 / JCM 5070 / NBRC 14893 / NCIMB 12804 / NRRL 8165 / MA-4680).